The following is a 361-amino-acid chain: Glyceraldehyde-3-phosphate dehydrogenase, glycosomal (361 aa).

NAD(+) contacts are provided by residues R13–I14, D39, and R93. D-glyceraldehyde 3-phosphate-binding positions include S166–T168, T198, T227–G228, and R250. C167 acts as the Nucleophile in catalysis. N336 lines the NAD(+) pocket. Residues S359–L361 carry the Microbody targeting signal motif.

This sequence belongs to the glyceraldehyde-3-phosphate dehydrogenase family. Homotetramer.

It is found in the glycosome. The enzyme catalyses D-glyceraldehyde 3-phosphate + phosphate + NAD(+) = (2R)-3-phospho-glyceroyl phosphate + NADH + H(+). Its pathway is carbohydrate degradation; glycolysis; pyruvate from D-glyceraldehyde 3-phosphate: step 1/5. The polypeptide is Glyceraldehyde-3-phosphate dehydrogenase, glycosomal (GAPDG) (Crithidia fasciculata).